The primary structure comprises 136 residues: Small ribosomal subunit protein bS16 (136 aa).

A compositionally biased stretch (basic residues) spans 113 to 122 (LALKSHRRSA). The disordered stretch occupies residues 113–136 (LALKSHRRSAKKEAEAKAATGGEA).

Belongs to the bacterial ribosomal protein bS16 family.

The chain is Small ribosomal subunit protein bS16 from Pelodictyon phaeoclathratiforme (strain DSM 5477 / BU-1).